The sequence spans 243 residues: Ubiquinone/menaquinone biosynthesis C-methyltransferase UbiE (243 aa).

S-adenosyl-L-methionine is bound by residues Thr-69, Asp-90, and 116 to 117; that span reads DA.

It belongs to the class I-like SAM-binding methyltransferase superfamily. MenG/UbiE family.

It carries out the reaction a 2-demethylmenaquinol + S-adenosyl-L-methionine = a menaquinol + S-adenosyl-L-homocysteine + H(+). The enzyme catalyses a 2-methoxy-6-(all-trans-polyprenyl)benzene-1,4-diol + S-adenosyl-L-methionine = a 5-methoxy-2-methyl-3-(all-trans-polyprenyl)benzene-1,4-diol + S-adenosyl-L-homocysteine + H(+). It functions in the pathway quinol/quinone metabolism; menaquinone biosynthesis; menaquinol from 1,4-dihydroxy-2-naphthoate: step 2/2. Its pathway is cofactor biosynthesis; ubiquinone biosynthesis. Methyltransferase required for the conversion of demethylmenaquinol (DMKH2) to menaquinol (MKH2) and the conversion of 2-polyprenyl-6-methoxy-1,4-benzoquinol (DDMQH2) to 2-polyprenyl-3-methyl-6-methoxy-1,4-benzoquinol (DMQH2). This is Ubiquinone/menaquinone biosynthesis C-methyltransferase UbiE from Paraburkholderia xenovorans (strain LB400).